The primary structure comprises 566 residues: Transcription factor tasR (566 aa).

Positions 1–30 (MISASRMEESASSSSLSDAAAPPPGAALQS) are enriched in low complexity. Residues 1 to 31 (MISASRMEESASSSSLSDAAAPPPGAALQSI) are disordered. The zn(2)-C6 fungal-type DNA-binding region spans 35–68 (CDRCRFHKLKCNVPAAGHGGPVPCERCTRAKVPC). Disordered regions lie at residues 72-174 (RRRR…PGQH), 346-382 (EFIVTNNPQKHLGSESSSSSSSSISNSSSNNEAGGDD), 422-453 (SESDGCGRGASRSGPNASPALRLGELPSTGTA), and 500-551 (RGVG…GLGG). Low complexity-rich tracts occupy residues 89–108 (PTRRATMPSPSPTPASTSAA) and 359–378 (SESSSSSSSSISNSSSNNEA). Residues 501–532 (GVGGGGGGGGGGGGGGGGGVGGGGGGGGGPGG) show a composition bias toward gly residues.

The protein localises to the nucleus. In terms of biological role, transcription factor that regulates the expression of the gene cluster that mediates the biosynthesis of the tetramic acids Sch210971 and Sch210972, potential anti-HIV fungal natural product that contain a decalin core. The sequence is that of Transcription factor tasR from Hapsidospora irregularis.